Reading from the N-terminus, the 876-residue chain is DNA gyrase subunit A (876 aa).

Residues 34–532 (LPDVRDGLKP…NSVDINIEDL (499 aa)) enclose the Topo IIA-type catalytic domain. Catalysis depends on Y122, which acts as the O-(5'-phospho-DNA)-tyrosine intermediate. The GyrA-box motif lies at 559 to 565 (QRRGGKG). Residues 844 to 876 (DEELDAIDGSAAEGDEDIAPEADTDDDIAEDEE) are disordered. A compositionally biased stretch (acidic residues) spans 856–876 (EGDEDIAPEADTDDDIAEDEE).

Belongs to the type II topoisomerase GyrA/ParC subunit family. In terms of assembly, heterotetramer, composed of two GyrA and two GyrB chains. In the heterotetramer, GyrA contains the active site tyrosine that forms a transient covalent intermediate with DNA, while GyrB binds cofactors and catalyzes ATP hydrolysis.

It localises to the cytoplasm. It carries out the reaction ATP-dependent breakage, passage and rejoining of double-stranded DNA.. A type II topoisomerase that negatively supercoils closed circular double-stranded (ds) DNA in an ATP-dependent manner to modulate DNA topology and maintain chromosomes in an underwound state. Negative supercoiling favors strand separation, and DNA replication, transcription, recombination and repair, all of which involve strand separation. Also able to catalyze the interconversion of other topological isomers of dsDNA rings, including catenanes and knotted rings. Type II topoisomerases break and join 2 DNA strands simultaneously in an ATP-dependent manner. The polypeptide is DNA gyrase subunit A (Klebsiella oxytoca).